We begin with the raw amino-acid sequence, 283 residues long: Aquaporin PIP2-5 (283 aa).

2 consecutive transmembrane segments (helical) span residues 37–57 and 74–94; these read AVIA…ATVI and CGGV…FILV. The short motif at 106–108 is the NPA 1 element; it reads NPA. The next 3 helical transmembrane spans lie at 125 to 145, 167 to 187, and 199 to 219; these read ILYI…VKGF, GTGL…VFSA, and VPVL…LATI. The NPA 2 signature appears at 227–229; it reads NPA. Residues 249 to 269 traverse the membrane as a helical segment; sequence IFWVGPFIGAAIAALYHQIVL.

Belongs to the MIP/aquaporin (TC 1.A.8) family. PIP (TC 1.A.8.11) subfamily. Expressed in roots.

Its subcellular location is the cell membrane. In terms of biological role, water channel required to facilitate the transport of water across cell membrane. May play a role in root water uptake. The sequence is that of Aquaporin PIP2-5 (PIP2-5) from Oryza sativa subsp. japonica (Rice).